The chain runs to 217 residues: Thymidylate kinase (217 aa).

Gly7–Ser14 serves as a coordination point for ATP.

This sequence belongs to the thymidylate kinase family.

It catalyses the reaction dTMP + ATP = dTDP + ADP. Its function is as follows. Phosphorylation of dTMP to form dTDP in both de novo and salvage pathways of dTTP synthesis. The chain is Thymidylate kinase from Chlorobaculum parvum (strain DSM 263 / NCIMB 8327) (Chlorobium vibrioforme subsp. thiosulfatophilum).